A 229-amino-acid chain; its full sequence is Potassium/proton antiporter CemA (229 aa).

The next 3 helical transmembrane spans lie at 6–26 (AFIP…ISLC), 107–127 (ILHF…SFWG), and 189–209 (ILSG…KYWI).

This sequence belongs to the CemA family.

It localises to the plastid. Its subcellular location is the chloroplast inner membrane. The enzyme catalyses K(+)(in) + H(+)(out) = K(+)(out) + H(+)(in). Contributes to K(+)/H(+) antiport activity by supporting proton efflux to control proton extrusion and homeostasis in chloroplasts in a light-dependent manner to modulate photosynthesis. Prevents excessive induction of non-photochemical quenching (NPQ) under continuous-light conditions. Indirectly promotes efficient inorganic carbon uptake into chloroplasts. The chain is Potassium/proton antiporter CemA from Olimarabidopsis pumila (Dwarf rocket).